Here is a 328-residue protein sequence, read N- to C-terminus: dITP/XTP pyrophosphatase (328 aa).

The segment at 1–129 (MSEKIYEYKD…ATSEQGFGDT (129 aa)) is unknown. The interval 130–324 (ILIATRNEGK…KLMEVFPAWQ (195 aa)) is NTP pyrophosphatase. 134 to 139 (TRNEGK) provides a ligand contact to substrate. Catalysis depends on Asp-196, which acts as the Proton acceptor. A Mg(2+)-binding site is contributed by Asp-196. Substrate contacts are provided by residues Ser-197, 280-283 (FGYD), Lys-303, and 308-309 (HR).

The protein belongs to the HAM1 NTPase family. In terms of assembly, homodimer. Mg(2+) is required as a cofactor.

It carries out the reaction XTP + H2O = XMP + diphosphate + H(+). The enzyme catalyses dITP + H2O = dIMP + diphosphate + H(+). It catalyses the reaction ITP + H2O = IMP + diphosphate + H(+). Functionally, pyrophosphatase that catalyzes the hydrolysis of nucleoside triphosphates to their monophosphate derivatives, with a high preference for the non-canonical purine nucleotides XTP (xanthosine triphosphate), dITP (deoxyinosine triphosphate) and ITP. Seems to function as a house-cleaning enzyme that removes non-canonical purine nucleotides from the nucleotide pool, thus preventing their incorporation into DNA/RNA and avoiding chromosomal lesions. The protein is dITP/XTP pyrophosphatase of Streptococcus pyogenes serotype M6 (strain ATCC BAA-946 / MGAS10394).